A 232-amino-acid polypeptide reads, in one-letter code: Protein TIFY 10c (232 aa).

The tract at residues 54-73 (PPAAGAGGAFRPPPTTMNLL) is disordered. The region spanning 114-149 (AGEKAQQLTIFYGGKVVVFENFPSTKVKDLLQIVST) is the Tify domain. Residues 152-177 (GVDKNTGTAATQSLPRPAHNSLPDLP) form a disordered region. Positions 156–165 (NTGTAATQSL) are enriched in polar residues. The short motif at 177 to 202 (PIARRNSLHRFLEKRKGRMNANAPYQ) is the Jas element. The Nuclear localization signal signature appears at 179 to 186 (ARRNSLHR).

This sequence belongs to the TIFY/JAZ family. As to quaternary structure, interacts with BHLH148. Interacts with COI1B in a coronatine-dependent manner. Coronatine is an analog of jasmonoyl isoleucine (JA-Ile). Interacts with TIFY5/JAZ2, TIFY6B/JAZ4, TIFY9/JAZ5, TIFY11A, TIFY11D/JAZ12, TIFY11G/JAZ15 and NINJA1. Ubiquitinated. Increase in jasmonoyl isoleucine (JA-Ile) levels mediates its degradation via COI1B-mediated proteasome pathway.

It is found in the nucleus. The protein localises to the cytoplasm. The protein resides in the cytosol. Repressor of jasmonate (JA) responses. Acts as a repressor of JA-induced resistance to the bacterial blight pathogen Xanthomonas oryzae pv. oryzae (Xoo). Regulates JA-induced accumulation of linalool at the transcriptional level of linalool synthase gene LIS. Linalool is important for resistance to bacterial blight pathogen Xoo. The chain is Protein TIFY 10c from Oryza sativa subsp. japonica (Rice).